An 801-amino-acid polypeptide reads, in one-letter code: Probable methionine--tRNA ligase (801 aa).

The 'HIGH' region motif lies at 25–35 (PYVNNVPHLGN). The 'KMSKS' region motif lies at 347–351 (KFSKS). Position 350 (K350) interacts with ATP. The tract at residues 606–633 (DKLKGTKLSDGGQKKEQKKQSGGSKSKN) is disordered. The tRNA-binding domain maps to 639–742 (TVAKLDIRVG…ESAAVGERVT (104 aa)).

The protein belongs to the class-I aminoacyl-tRNA synthetase family.

It localises to the cytoplasm. It catalyses the reaction tRNA(Met) + L-methionine + ATP = L-methionyl-tRNA(Met) + AMP + diphosphate. The chain is Probable methionine--tRNA ligase from Oryza sativa subsp. japonica (Rice).